The sequence spans 989 residues: Envelope glycoprotein gp160 (989 aa).

An N-terminal signal peptide occupies residues 1–106; that stretch reads MTSKESKPSR…CLMWEMRKGN (106 aa). Topologically, residues 107–838 are extracellular; sequence QCQAEEVIAL…WSSWFSWLKY (732 aa). N-linked (GlcNAc...) asparagine; by host glycosylation is found at Asn-140, Asn-161, Asn-206, Asn-258, Asn-298, Asn-364, Asn-381, Asn-387, Asn-403, Asn-435, Asn-439, Asn-470, Asn-475, Asn-481, Asn-491, Asn-501, Asn-515, Asn-527, Asn-537, Asn-542, Asn-543, Asn-551, and Asn-568. The interval 663–683 is fusion peptide; that stretch reads GIGLVIVLAIMAIIAAAGAGL. The stretch at 695–745 forms a coiled coil; that stretch reads RTAVQSLANATAAQQEVLEASYAMVQHIAKGIRILEARVARVEALVDRMMV. Asn-703 is a glycosylation site (N-linked (GlcNAc...) asparagine; by host). The interval 729–745 is immunosuppression; sequence LEARVARVEALVDRMMV. N-linked (GlcNAc...) asparagine; by host glycans are attached at residues Asn-771, Asn-778, Asn-794, and Asn-828. The stretch at 786 to 821 forms a coiled coil; that stretch reads EEIEQHEGNLSLLLREAALQVHIAQRDARRIPDAWK. The helical transmembrane segment at 839–859 threads the bilayer; the sequence is IPWIIMGIVGLICFRILMCVI. The Cytoplasmic segment spans residues 860 to 989; it reads SMCLQAYKQV…PTLENDYVEL (130 aa). Cys-862 carries the S-palmitoyl cysteine; by host lipid modification.

In terms of assembly, the mature envelope protein (Env) consists of a trimer of SU-TM heterodimers attached by noncovalent interactions or by a labile interchain disulfide bond. In terms of processing, specific enzymatic cleavages in vivo yield mature proteins. Envelope glycoproteins are synthesized as an inactive precursor that is N-glycosylated and processed likely by host cell furin or by a furin-like protease in the Golgi to yield the mature SU and TM proteins. The cleavage site between SU and TM requires the minimal sequence [KR]-X-[KR]-R. Post-translationally, the transmembrane protein is palmitoylated.

The protein localises to the virion membrane. It is found in the host cell membrane. Functionally, the surface protein (SU) attaches the virus to the host cell by binding to its receptor. This interaction triggers the refolding of the transmembrane protein (TM) and is thought to activate its fusogenic potential by unmasking its fusion peptide. Fusion occurs at the host cell plasma membrane. Its function is as follows. The transmembrane protein (TM) acts as a class I viral fusion protein. Under the current model, the protein has at least 3 conformational states: pre-fusion native state, pre-hairpin intermediate state, and post-fusion hairpin state. During viral and target cell membrane fusion, the coiled coil regions (heptad repeats) assume a trimer-of-hairpins structure, positioning the fusion peptide in close proximity to the C-terminal region of the ectodomain. The formation of this structure appears to drive apposition and subsequent fusion of viral and target cell membranes. Membranes fusion leads to delivery of the nucleocapsid into the cytoplasm. The protein is Envelope glycoprotein gp160 (env) of Ovis aries (Sheep).